We begin with the raw amino-acid sequence, 200 residues long: Recombination protein RecR (200 aa).

The C4-type zinc finger occupies 59–74 (CEICGNIDTRSPCTVC). The Toprim domain occupies 82-177 (SIIVVVADVA…KVTRLAHGVP (96 aa)).

It belongs to the RecR family.

Its function is as follows. May play a role in DNA repair. It seems to be involved in an RecBC-independent recombinational process of DNA repair. It may act with RecF and RecO. The polypeptide is Recombination protein RecR (Nitrobacter hamburgensis (strain DSM 10229 / NCIMB 13809 / X14)).